A 154-amino-acid polypeptide reads, in one-letter code: MLLFSKKIAQHKGGICLEGIVRFGVSMESKLLKQFDELIKKKNYNNRSEAIRDLIRDFIVENQWEAEDVETIGTITYVFNHEVREINDKLTDMQHKHYKNIISTMHVHLDEHNCIEVMIVRGKAKEIVKIADEIISTRGVKHGKLVMTTTGENL.

Ni(2+) is bound by residues histidine 95, histidine 106, histidine 108, and cysteine 114.

This sequence belongs to the transcriptional regulatory CopG/NikR family. It depends on Ni(2+) as a cofactor.

Functionally, transcriptional regulator. The protein is Putative nickel-responsive regulator of Caldanaerobacter subterraneus subsp. tengcongensis (strain DSM 15242 / JCM 11007 / NBRC 100824 / MB4) (Thermoanaerobacter tengcongensis).